The primary structure comprises 342 residues: Biotin synthase (342 aa).

The 225-residue stretch at 36-260 (NRIQISTLLS…MMPKSYIRLS (225 aa)) folds into the Radical SAM core domain. Residues cysteine 51, cysteine 55, and cysteine 58 each contribute to the [4Fe-4S] cluster site. Cysteine 95, cysteine 126, cysteine 186, and arginine 258 together coordinate [2Fe-2S] cluster.

The protein belongs to the radical SAM superfamily. Biotin synthase family. Homodimer. Requires [4Fe-4S] cluster as cofactor. It depends on [2Fe-2S] cluster as a cofactor.

It carries out the reaction (4R,5S)-dethiobiotin + (sulfur carrier)-SH + 2 reduced [2Fe-2S]-[ferredoxin] + 2 S-adenosyl-L-methionine = (sulfur carrier)-H + biotin + 2 5'-deoxyadenosine + 2 L-methionine + 2 oxidized [2Fe-2S]-[ferredoxin]. It participates in cofactor biosynthesis; biotin biosynthesis; biotin from 7,8-diaminononanoate: step 2/2. In terms of biological role, catalyzes the conversion of dethiobiotin (DTB) to biotin by the insertion of a sulfur atom into dethiobiotin via a radical-based mechanism. The protein is Biotin synthase of Buchnera aphidicola subsp. Schizaphis graminum (strain Sg).